A 589-amino-acid chain; its full sequence is Muscarinic acetylcholine receptor M3 (589 aa).

Residues 1-66 (MTLHSNSTTS…DPLGGHTIWQ (66 aa)) lie on the Extracellular side of the membrane. Residues Asn6, Asn15, Asn41, Asn48, and Asn52 are each glycosylated (N-linked (GlcNAc...) asparagine). A helical membrane pass occupies residues 67–90 (VVFIAFLTGFLALVTIIGNILVIV). The Cytoplasmic portion of the chain corresponds to 91–103 (AFKVNKQLKTVNN). A helical membrane pass occupies residues 104–129 (YFLLSLACADLIIGVISMNLFTTYII). At 130 to 141 (MNRWALGNLACD) the chain is on the extracellular side. Cys140 and Cys220 form a disulfide bridge. Residues 142 to 163 (LWLSIDYVASNASVMNLLVISF) traverse the membrane as a helical segment. Topologically, residues 164–183 (DRYFSITRPLTYRAKRTTKR) are cytoplasmic. The helical transmembrane segment at 184–205 (AGVMIGLAWVISFVLWAPAILF) threads the bilayer. The Extracellular portion of the chain corresponds to 206–228 (WQYFVGKRTVPPGECFIQFLSEP). Residues 229–251 (TITFGTAIAAFYMPVTIMTILYW) form a helical membrane-spanning segment. At 252–490 (RIYKETEKRT…SLIKEKKAAQ (239 aa)) the chain is on the cytoplasmic side. Residues 274–280 (AEAENFV) carry the Basolateral sorting signal motif. 2 disordered regions span residues 275–295 (EAEN…YELQ) and 323–356 (AEQM…EEDI). Residues 283-295 (TGSSRSCSSYELQ) show a composition bias toward polar residues. Residues 333-344 (SDSWNNNDAAAS) show a composition bias toward low complexity. Residue Ser384 is modified to Phosphoserine. The chain crosses the membrane as a helical span at residues 491 to 513 (TLSAILLAFIITWTPYNIMVLVN). Topologically, residues 514 to 525 (TFCDSCIPKTYW) are extracellular. Cys516 and Cys519 form a disulfide bridge. A helical membrane pass occupies residues 526–545 (NLGYWLCYINSTVNPVCYAL). The Cytoplasmic portion of the chain corresponds to 546-589 (CNKTFRTTFKMLLLCQCDKRKRRKQQYQQRQSVIFHKRVPEQAL).

It belongs to the G-protein coupled receptor 1 family. Muscarinic acetylcholine receptor subfamily. CHRM3 sub-subfamily. In terms of assembly, homodimer; the dimers can form tetramers. Interacts with NALCN. Interacts with TMEM147. In terms of tissue distribution, expressed in cerebral cortex, submandibular gland, hypothalamus, pancreas, liver, and ileum.

It is found in the cell membrane. Its subcellular location is the postsynaptic cell membrane. It localises to the basolateral cell membrane. The protein resides in the endoplasmic reticulum membrane. Functionally, the muscarinic acetylcholine receptor mediates various cellular responses, including inhibition of adenylate cyclase, breakdown of phosphoinositides and modulation of potassium channels through the action of G proteins. Primary transducing effect is Pi turnover. In Mus musculus (Mouse), this protein is Muscarinic acetylcholine receptor M3 (Chrm3).